The following is a 303-amino-acid chain: N-acetylmuramic acid 6-phosphate etherase (303 aa).

The SIS domain occupies 62–225 (IVAAFRQGGR…TTASMVLLGK (164 aa)). Glutamate 90 functions as the Proton donor in the catalytic mechanism. Glutamate 121 is an active-site residue.

Belongs to the GCKR-like family. MurNAc-6-P etherase subfamily. In terms of assembly, homodimer.

It catalyses the reaction N-acetyl-D-muramate 6-phosphate + H2O = N-acetyl-D-glucosamine 6-phosphate + (R)-lactate. Its pathway is amino-sugar metabolism; 1,6-anhydro-N-acetylmuramate degradation. The protein operates within amino-sugar metabolism; N-acetylmuramate degradation. It participates in cell wall biogenesis; peptidoglycan recycling. Its function is as follows. Specifically catalyzes the cleavage of the D-lactyl ether substituent of MurNAc 6-phosphate, producing GlcNAc 6-phosphate and D-lactate. Together with AnmK, is also required for the utilization of anhydro-N-acetylmuramic acid (anhMurNAc) either imported from the medium or derived from its own cell wall murein, and thus plays a role in cell wall recycling. The sequence is that of N-acetylmuramic acid 6-phosphate etherase from Histophilus somni (strain 129Pt) (Haemophilus somnus).